Here is an 816-residue protein sequence, read N- to C-terminus: Larval serum protein 1 alpha chain (816 aa).

The first 16 residues, 1 to 16 (MKFAIAFLACVAVVTA), serve as a signal peptide directing secretion.

This sequence belongs to the hemocyanin family. Heterohexamer, composed of three subunits, alpha, beta and gamma. In terms of tissue distribution, larval hemolymph.

It is found in the secreted. It localises to the extracellular space. Functionally, larval storage protein (LSP) which may serve as a store of amino acids for synthesis of adult proteins. In Drosophila melanogaster (Fruit fly), this protein is Larval serum protein 1 alpha chain (Lsp1alpha).